The primary structure comprises 219 residues: 7-cyano-7-deazaguanine synthase (219 aa).

10-20 serves as a coordination point for ATP; it reads FSGGQDSTTCL. Zn(2+) contacts are provided by Cys188, Cys196, Cys199, and Cys202.

The protein belongs to the QueC family. It depends on Zn(2+) as a cofactor.

The enzyme catalyses 7-carboxy-7-deazaguanine + NH4(+) + ATP = 7-cyano-7-deazaguanine + ADP + phosphate + H2O + H(+). Its pathway is purine metabolism; 7-cyano-7-deazaguanine biosynthesis. In terms of biological role, catalyzes the ATP-dependent conversion of 7-carboxy-7-deazaguanine (CDG) to 7-cyano-7-deazaguanine (preQ(0)). The sequence is that of 7-cyano-7-deazaguanine synthase from Neisseria meningitidis serogroup C / serotype 2a (strain ATCC 700532 / DSM 15464 / FAM18).